The primary structure comprises 319 residues: Acetyl-coenzyme A carboxylase carboxyl transferase subunit alpha (319 aa).

Residues 39-293 (KLEQKAAQLL…GDAIAEELKG (255 aa)) enclose the CoA carboxyltransferase C-terminal domain.

Belongs to the AccA family. In terms of assembly, acetyl-CoA carboxylase is a heterohexamer composed of biotin carboxyl carrier protein (AccB), biotin carboxylase (AccC) and two subunits each of ACCase subunit alpha (AccA) and ACCase subunit beta (AccD).

It localises to the cytoplasm. It catalyses the reaction N(6)-carboxybiotinyl-L-lysyl-[protein] + acetyl-CoA = N(6)-biotinyl-L-lysyl-[protein] + malonyl-CoA. The protein operates within lipid metabolism; malonyl-CoA biosynthesis; malonyl-CoA from acetyl-CoA: step 1/1. Functionally, component of the acetyl coenzyme A carboxylase (ACC) complex. First, biotin carboxylase catalyzes the carboxylation of biotin on its carrier protein (BCCP) and then the CO(2) group is transferred by the carboxyltransferase to acetyl-CoA to form malonyl-CoA. The polypeptide is Acetyl-coenzyme A carboxylase carboxyl transferase subunit alpha (Parvibaculum lavamentivorans (strain DS-1 / DSM 13023 / NCIMB 13966)).